The primary structure comprises 157 residues: uncharacterized protein (157 aa).

Positions 36–63 (QIEELNELCQFFNISLTYTRESLEELEN) form a coiled coil.

This is an uncharacterized protein from Bacillus subtilis (strain 168).